The primary structure comprises 164 residues: SsrA-binding protein (164 aa).

The protein belongs to the SmpB family.

It is found in the cytoplasm. Functionally, required for rescue of stalled ribosomes mediated by trans-translation. Binds to transfer-messenger RNA (tmRNA), required for stable association of tmRNA with ribosomes. tmRNA and SmpB together mimic tRNA shape, replacing the anticodon stem-loop with SmpB. tmRNA is encoded by the ssrA gene; the 2 termini fold to resemble tRNA(Ala) and it encodes a 'tag peptide', a short internal open reading frame. During trans-translation Ala-aminoacylated tmRNA acts like a tRNA, entering the A-site of stalled ribosomes, displacing the stalled mRNA. The ribosome then switches to translate the ORF on the tmRNA; the nascent peptide is terminated with the 'tag peptide' encoded by the tmRNA and targeted for degradation. The ribosome is freed to recommence translation, which seems to be the essential function of trans-translation. This Corynebacterium glutamicum (strain R) protein is SsrA-binding protein.